Consider the following 445-residue polypeptide: Tol-Pal system protein TolB (445 aa).

The signal sequence occupies residues 1–26; the sequence is MLNRRNFIRTTSALAASTALPGYAFG.

It belongs to the TolB family. As to quaternary structure, the Tol-Pal system is composed of five core proteins: the inner membrane proteins TolA, TolQ and TolR, the periplasmic protein TolB and the outer membrane protein Pal. They form a network linking the inner and outer membranes and the peptidoglycan layer.

Its subcellular location is the periplasm. Part of the Tol-Pal system, which plays a role in outer membrane invagination during cell division and is important for maintaining outer membrane integrity. The sequence is that of Tol-Pal system protein TolB from Jannaschia sp. (strain CCS1).